A 273-amino-acid polypeptide reads, in one-letter code: MTVRKNQASLTAEEKRRFVAALLELKRTGRYDAFVTTHNAFILGDTDNGERTGHRSPSFLPWHRRFLLEFERALQSVDASVALPYWDWSADRSTRSSLWAPDFLGGTGRSRDGQVMDGPFAASAGNWPINVRVDGRTFLRRALGAGVSELPTRAEVDSVLAMATYDMAPWNSGSDGFRNHLEGWRGVNLHNRVHVWVGGQMATGVSPNDPVFWLHHAYIDKLWAEWQRRHPSSPYLPGGGTPNVVDLNETMKPWNDTTPAALLDHTRHYTFDV.

Histidine 38, histidine 54, histidine 63, histidine 190, histidine 194, and histidine 216 together coordinate Cu cation.

This sequence belongs to the tyrosinase family. The cofactor is Cu(2+).

The enzyme catalyses 2 L-dopa + O2 = 2 L-dopaquinone + 2 H2O. It carries out the reaction L-tyrosine + O2 = L-dopaquinone + H2O. Functionally, this is a copper-containing oxidase that functions in the formation of pigments such as melanins and other polyphenolic compounds. The polypeptide is Tyrosinase (melC2) (Streptomyces antibioticus).